Reading from the N-terminus, the 368-residue chain is UPF0284 protein SYNPCC7002_A1742 (368 aa).

Belongs to the UPF0284 family.

This Picosynechococcus sp. (strain ATCC 27264 / PCC 7002 / PR-6) (Agmenellum quadruplicatum) protein is UPF0284 protein SYNPCC7002_A1742.